A 351-amino-acid chain; its full sequence is 4-hydroxy-3-methylbut-2-enyl diphosphate reductase (351 aa).

Cys18 provides a ligand contact to [4Fe-4S] cluster. The (2E)-4-hydroxy-3-methylbut-2-enyl diphosphate site is built by His47 and His83. Dimethylallyl diphosphate is bound by residues His47 and His83. Isopentenyl diphosphate contacts are provided by His47 and His83. Cys105 is a [4Fe-4S] cluster binding site. His133 is a (2E)-4-hydroxy-3-methylbut-2-enyl diphosphate binding site. His133 is a dimethylallyl diphosphate binding site. Position 133 (His133) interacts with isopentenyl diphosphate. Glu135 acts as the Proton donor in catalysis. Thr174 contributes to the (2E)-4-hydroxy-3-methylbut-2-enyl diphosphate binding site. Residue Cys204 participates in [4Fe-4S] cluster binding. Ser232, Ser233, Asn234, and Ser277 together coordinate (2E)-4-hydroxy-3-methylbut-2-enyl diphosphate. Dimethylallyl diphosphate contacts are provided by Ser232, Ser233, Asn234, and Ser277. 4 residues coordinate isopentenyl diphosphate: Ser232, Ser233, Asn234, and Ser277.

This sequence belongs to the IspH family. Requires [4Fe-4S] cluster as cofactor.

It catalyses the reaction isopentenyl diphosphate + 2 oxidized [2Fe-2S]-[ferredoxin] + H2O = (2E)-4-hydroxy-3-methylbut-2-enyl diphosphate + 2 reduced [2Fe-2S]-[ferredoxin] + 2 H(+). It carries out the reaction dimethylallyl diphosphate + 2 oxidized [2Fe-2S]-[ferredoxin] + H2O = (2E)-4-hydroxy-3-methylbut-2-enyl diphosphate + 2 reduced [2Fe-2S]-[ferredoxin] + 2 H(+). The protein operates within isoprenoid biosynthesis; dimethylallyl diphosphate biosynthesis; dimethylallyl diphosphate from (2E)-4-hydroxy-3-methylbutenyl diphosphate: step 1/1. It participates in isoprenoid biosynthesis; isopentenyl diphosphate biosynthesis via DXP pathway; isopentenyl diphosphate from 1-deoxy-D-xylulose 5-phosphate: step 6/6. Catalyzes the conversion of 1-hydroxy-2-methyl-2-(E)-butenyl 4-diphosphate (HMBPP) into a mixture of isopentenyl diphosphate (IPP) and dimethylallyl diphosphate (DMAPP). Acts in the terminal step of the DOXP/MEP pathway for isoprenoid precursor biosynthesis. The protein is 4-hydroxy-3-methylbut-2-enyl diphosphate reductase of Bartonella tribocorum (strain CIP 105476 / IBS 506).